The sequence spans 429 residues: Cyclin-B2-2 (429 aa).

The disordered stretch occupies residues 66–98 (SQRKQESCDKKKLDSLHPSISRSQEETKKLKPS). Basic and acidic residues predominate over residues 68 to 80 (RKQESCDKKKLDS).

This sequence belongs to the cyclin family. Cyclin AB subfamily. As to quaternary structure, interacts with CDC20-1 and CDC20-2. In terms of tissue distribution, expressed in roots.

This chain is Cyclin-B2-2 (CYCB2-2), found in Arabidopsis thaliana (Mouse-ear cress).